The following is a 195-amino-acid chain: SPbeta prophage-derived uncharacterized protein YotM (195 aa).

The sequence is that of SPbeta prophage-derived uncharacterized protein YotM (yotM) from Bacillus subtilis (strain 168).